Reading from the N-terminus, the 234-residue chain is Viral Fc-gamma receptor-like protein IR11 (234 aa).

An N-terminal signal peptide occupies residues 1–23; sequence MQTYSTPLTLVIVTSLFLFTTQG. Positions 24–122 constitute an Ig-like V-type domain; the sequence is SSSNAVEPTK…VKDTGVYLLQ (99 aa). Residues 24–182 are Extracellular-facing; the sequence is SSSNAVEPTK…DLKRQWSGLS (159 aa). Residues Asn-57, Asn-105, and Asn-110 are each glycosylated (N-linked (GlcNAc...) asparagine; by host). A helical membrane pass occupies residues 183 to 203; that stretch reads LHCAWVSGMMIFVGALVICFL. Over 204-234 the chain is Cytoplasmic; the sequence is RSQRIGEQDAEHLRTDLDTEPLLLTVDGDLQ.

Belongs to the RL11 family.

The protein localises to the membrane. This Homo sapiens (Human) protein is Viral Fc-gamma receptor-like protein IR11.